The sequence spans 432 residues: Glucose-6-phosphate isomerase (432 aa).

The Proton donor role is filled by E283. Active-site residues include H304 and K418.

The protein belongs to the GPI family.

It localises to the cytoplasm. The enzyme catalyses alpha-D-glucose 6-phosphate = beta-D-fructose 6-phosphate. The protein operates within carbohydrate biosynthesis; gluconeogenesis. It functions in the pathway carbohydrate degradation; glycolysis; D-glyceraldehyde 3-phosphate and glycerone phosphate from D-glucose: step 2/4. Its function is as follows. Catalyzes the reversible isomerization of glucose-6-phosphate to fructose-6-phosphate. This chain is Glucose-6-phosphate isomerase, found in Rubrobacter xylanophilus (strain DSM 9941 / JCM 11954 / NBRC 16129 / PRD-1).